Here is a 565-residue protein sequence, read N- to C-terminus: Adenine deaminase (565 aa).

It belongs to the metallo-dependent hydrolases superfamily. Adenine deaminase family. The cofactor is Mn(2+).

It catalyses the reaction adenine + H2O + H(+) = hypoxanthine + NH4(+). This chain is Adenine deaminase, found in Gluconobacter oxydans (strain 621H) (Gluconobacter suboxydans).